We begin with the raw amino-acid sequence, 312 residues long: Ornithine carbamoyltransferase (312 aa).

Residues 57–60 (STRT), Gln84, Arg108, and 135–138 (HPCQ) contribute to the carbamoyl phosphate site. Residues Asn166, Asp226, and 230 to 231 (SM) contribute to the L-ornithine site. Carbamoyl phosphate-binding positions include 265 to 266 (CL) and Arg293.

It belongs to the aspartate/ornithine carbamoyltransferase superfamily. OTCase family.

The protein resides in the cytoplasm. The enzyme catalyses carbamoyl phosphate + L-ornithine = L-citrulline + phosphate + H(+). Its pathway is amino-acid degradation; L-arginine degradation via ADI pathway; carbamoyl phosphate from L-arginine: step 2/2. Its function is as follows. Reversibly catalyzes the transfer of the carbamoyl group from carbamoyl phosphate (CP) to the N(epsilon) atom of ornithine (ORN) to produce L-citrulline. This Brucella abortus (strain 2308) protein is Ornithine carbamoyltransferase.